A 466-amino-acid chain; its full sequence is Cysteine--tRNA ligase (466 aa).

Cysteine 28 is a binding site for Zn(2+). The 'HIGH' region motif lies at 30–40 (PTVYNFFHIGN). Positions 208, 233, and 237 each coordinate Zn(2+). Residues 265–269 (KMSKS) carry the 'KMSKS' region motif. Lysine 268 contributes to the ATP binding site.

This sequence belongs to the class-I aminoacyl-tRNA synthetase family. Monomer. Zn(2+) serves as cofactor.

It is found in the cytoplasm. The catalysed reaction is tRNA(Cys) + L-cysteine + ATP = L-cysteinyl-tRNA(Cys) + AMP + diphosphate. The sequence is that of Cysteine--tRNA ligase from Clostridium perfringens (strain 13 / Type A).